Consider the following 544-residue polypeptide: Tyrosine-protein kinase fynb (544 aa).

Gly2 carries the N-myristoyl glycine lipid modification. S-palmitoyl cysteine attachment occurs at residues Cys3 and Cys6. Residues 89 to 150 (TGVTLFVALY…PSNYVAPVDS (62 aa)) form the SH3 domain. One can recognise an SH2 domain in the interval 156–253 (WYFGKLGRKD…GLCCRLVVPC (98 aa)). The Protein kinase domain maps to 278–531 (LQLIKRLGNG…YLQAFLEDYF (254 aa)). Residues 284 to 292 (LGNGQFGEV) and Lys306 contribute to the ATP site. Residue Asp397 is the Proton acceptor of the active site. The residue at position 427 (Tyr427) is a Phosphotyrosine; by autocatalysis. Tyr538 carries the post-translational modification Phosphotyrosine.

This sequence belongs to the protein kinase superfamily. Tyr protein kinase family. SRC subfamily. It depends on Mn(2+) as a cofactor.

Its subcellular location is the cytoplasm. The enzyme catalyses L-tyrosyl-[protein] + ATP = O-phospho-L-tyrosyl-[protein] + ADP + H(+). Its activity is regulated as follows. Inhibited by phosphorylation of Tyr-538 by leukocyte common antigen and activated by dephosphorylation of this site. In terms of biological role, tyrosine-protein kinase implicated in the control of cell growth. Plays a role in the regulation of intracellular calcium levels. Required in brain development and mature brain function with important roles in the regulation of axon growth, axon guidance, and neurite extension. Role in CNTN1-mediated signaling. The protein is Tyrosine-protein kinase fynb (fynb) of Danio rerio (Zebrafish).